The primary structure comprises 379 residues: Cytochrome b (379 aa).

4 helical membrane passes run 33-53 (FGSL…FLAM), 77-98 (WTIR…FIHV), 113-133 (WNVG…GYVL), and 178-198 (FFAL…IHLL). The heme b site is built by His-83 and His-97. His-182 and His-196 together coordinate heme b. Residue His-201 participates in a ubiquinone binding. Transmembrane regions (helical) follow at residues 226–246 (TKDF…ALFY), 288–308 (LGGV…PFLQ), 320–340 (LSQF…WIGG), and 347–367 (FINI…FIMP).

This sequence belongs to the cytochrome b family. The cytochrome bc1 complex contains 11 subunits: 3 respiratory subunits (MT-CYB, CYC1 and UQCRFS1), 2 core proteins (UQCRC1 and UQCRC2) and 6 low-molecular weight proteins (UQCRH/QCR6, UQCRB/QCR7, UQCRQ/QCR8, UQCR10/QCR9, UQCR11/QCR10 and a cleavage product of UQCRFS1). This cytochrome bc1 complex then forms a dimer. Requires heme b as cofactor.

Its subcellular location is the mitochondrion inner membrane. Its function is as follows. Component of the ubiquinol-cytochrome c reductase complex (complex III or cytochrome b-c1 complex) that is part of the mitochondrial respiratory chain. The b-c1 complex mediates electron transfer from ubiquinol to cytochrome c. Contributes to the generation of a proton gradient across the mitochondrial membrane that is then used for ATP synthesis. This chain is Cytochrome b (MT-CYB), found in Lepilemur sahamalazensis (Sahamalaza sportive lemur).